Reading from the N-terminus, the 148-residue chain is Ubiquitin-conjugating enzyme E2-16 kDa (148 aa).

Residues 2–148 (SSSKRIAKEL…AKEWTKKYAV (147 aa)) form the UBC core domain. Residue S12 is modified to Phosphoserine. Residue C86 is the Glycyl thioester intermediate of the active site. A Glycyl lysine isopeptide (Lys-Gly) (interchain with G-Cter in ubiquitin) cross-link involves residue K91.

The protein belongs to the ubiquitin-conjugating enzyme family. In terms of assembly, component of the RSP5-UBA1-UBC5 ubiquitin ligase complex composed of E3 RSP5, E1 UBA1 and E2 UBC5. Post-translationally, the N-terminus is blocked.

The enzyme catalyses S-ubiquitinyl-[E1 ubiquitin-activating enzyme]-L-cysteine + [E2 ubiquitin-conjugating enzyme]-L-cysteine = [E1 ubiquitin-activating enzyme]-L-cysteine + S-ubiquitinyl-[E2 ubiquitin-conjugating enzyme]-L-cysteine.. It functions in the pathway protein modification; protein ubiquitination. Functionally, catalyzes the covalent attachment of ubiquitin to other proteins. Mediates the selective degradation of short-lived and abnormal proteins. The RSP5-UBA1-UBC5 ubiquitin ligase complex ubiquitinates RPO21 forming 'Lys-63'-linked polyubiquitin chains. The polypeptide is Ubiquitin-conjugating enzyme E2-16 kDa (UBC5) (Saccharomyces cerevisiae (strain ATCC 204508 / S288c) (Baker's yeast)).